The following is a 38-amino-acid chain: 4 kDa defensin (38 aa).

Intrachain disulfides connect Cys4–Cys25, Cys11–Cys33, and Cys15–Cys35.

This sequence belongs to the invertebrate defensin family. Type 2 subfamily.

The protein localises to the secreted. Dual-function peptide with antimicrobial and potassium channel-blocking activities. Shows inhibitory activity against Gram-positive bacteria such as M.luteus, S.aureus, B.subtilis, and M.luteus as well as methicillin-resistant S.aureus (MIC=0.1-20 uM). Does not act on bacteria by disrupting membranes. Also moderately inhibits Kv1.1/KCNA1, Kv1.2/KCNA2, and Kv1.3/KCNA3 potassium channels. Inhibits potassium channels by interacting with the pore region. Does not show hemolytic activity. In Leiurus hebraeus (Hebrew deathstalker scorpion), this protein is 4 kDa defensin.